Here is a 337-residue protein sequence, read N- to C-terminus: Glyceraldehyde-3-phosphate dehydrogenase 1, cytosolic (337 aa).

Residues 1 to 151 (MGKIKIGING…YTSDVNIVSN (151 aa)) form a binding to NAD region. Residues 13–14 (RI), D35, and R82 contribute to the NAD(+) site. The catalytic stretch occupies residues 152–337 (ASCTTNCLAP…DLIRHMFKTQ (186 aa)). Residues 153–155 (SCT), T184, 213–214 (TG), and R236 each bind D-glyceraldehyde 3-phosphate. C154 functions as the Nucleophile in the catalytic mechanism. N318 contacts NAD(+).

It belongs to the glyceraldehyde-3-phosphate dehydrogenase family. Homotetramer.

It is found in the cytoplasm. It carries out the reaction D-glyceraldehyde 3-phosphate + phosphate + NAD(+) = (2R)-3-phospho-glyceroyl phosphate + NADH + H(+). It functions in the pathway carbohydrate degradation; glycolysis; pyruvate from D-glyceraldehyde 3-phosphate: step 1/5. Its function is as follows. Key enzyme in glycolysis that catalyzes the first step of the pathway by converting D-glyceraldehyde 3-phosphate (G3P) into 3-phospho-D-glyceroyl phosphate. Essential for the maintenance of cellular ATP levels and carbohydrate metabolism. The sequence is that of Glyceraldehyde-3-phosphate dehydrogenase 1, cytosolic (GAPC1) from Zea mays (Maize).